The primary structure comprises 566 residues: 3-oxosteroid 1-dehydrogenase (566 aa).

FAD is bound at residue 10-39 (DVVVVGSGAAGMVAALVAAHRGLSTVVVEK).

The protein belongs to the FAD-dependent oxidoreductase 2 family. 3-oxosteroid dehydrogenase subfamily. FAD is required as a cofactor.

The catalysed reaction is a 3-oxosteroid + A = a 3-oxo-Delta(1)-steroid + AH2. It carries out the reaction a 3-oxo-Delta(4)-steroid + A = a 3-oxo-Delta(1,4)-steroid + AH2. In terms of biological role, involved in the degradation of cholesterol. Catalyzes the elimination of the C-1 and C-2 hydrogen atoms of the A-ring from the polycyclic ring structure of 3-ketosteroids. Is also involved in the formation of 3-keto-1,4-diene-steroid from 3-keto-4-ene-steroid. This Mycobacterium tuberculosis (strain CDC 1551 / Oshkosh) protein is 3-oxosteroid 1-dehydrogenase (kstD).